A 132-amino-acid polypeptide reads, in one-letter code: Agouti-signaling protein (132 aa).

Residues 1–22 (MDVTRLLLATLLVFLCFFAAYS) form the signal peptide. A glycan (N-linked (GlcNAc...) asparagine) is linked at Asn-39. Positions 61-93 (KISRKEAEKKRSSKKEASKQKVARPRTPLSVPC) are disordered. Residues 64 to 79 (RKEAEKKRSSKKEASK) show a composition bias toward basic and acidic residues. 5 disulfide bridges follow: Cys-93–Cys-108, Cys-100–Cys-114, Cys-107–Cys-125, Cys-111–Cys-132, and Cys-116–Cys-123. The Agouti domain occupies 93–132 (CVSTRGSCKPPAPACCHPCASCQCRFFRSACSCRVLNVNC).

It localises to the secreted. Its function is as follows. Involved in the regulation of melanogenesis. The binding of ASP to MC1R precludes alpha-MSH initiated signaling and thus blocks production of cAMP, leading to a down-regulation of eumelanogenesis (brown/black pigment) and thus increasing synthesis of pheomelanin (yellow/red pigment). The chain is Agouti-signaling protein (ASIP) from Callithrix geoffroyi (Geoffroy's marmoset).